Consider the following 1012-residue polypeptide: MAKRGKSVVRTLEDLTLDSGYGGAADSFRSSSLSLCCSEAHISYAHGGHCWNLTDSMRSRHNSLDTVNTVLAEDGETLECSGHCAKLPELEDVPWSLGEVENALNKEEELRFGTVSADLLARLSALVCRALVRIAREAQRLSLRYGKCTKYEVQSAIKMILSWTISVNCIAASLSALSMYNMSTEDKFSRGKSERCGLVFSVGKFFRWMVDSRVAVRVHEHAAIYLTGCMESLFREVFTRVLNSSVVEKDNGIPKFTLESFEQALSNDSELYGLLLPYQHLTCGKNANGILSLPDSLSLHRNQQCSSKAGDAYSQSEQRTIEQSLLATRVGSIAELSDLVSRAMHYLQPLSIKNHSNGTPLPQKSSLVHWEPEALYTLCYFMHCPQMEWENPNVEPSKVTLQNERPFLVLPPLMEWIRVALAHAEHRRSFSVDSDDVRQAARLLLPGVDCEPRQLKTDDCFCVSRKLDAASTEAKFLQDLGFRMLNCGRTDLVNQAINLLGPGGINSMSEQGMTPLMYACVRGDEAMVQMLLDAGADINSEVPNTVQKFPSVFPETRQATPLTFAVLHQHIPVVQLLLDAGANVEGSLQDGMENYTETPLQLASAAGNFELVSLLLERGADPMIGTMYRNGISTAPHGDMNSYSLAAAHGHRNVFCKLLSQSEKGKADVLSLQEILAEGSDLEERNSLKMEATRTGKAKLKALREAMYHSSEHGYVDITLDIRSLGVPWTLHTWLESLRTCFLQHRRPLIQGLLKEFSSIEEEEYTEELITHGLPLMFQILRASKNEVISQQLAVIFTQCYGPYPIPKLTEIKRKQTSRLDPHFLNNKEMSDVTFLVEGKPFYAHKVLLFTASNRFKLLLANRPAAENTCIEISHVKYNVFQLVMQYLYCGGTDALHIRNTEVMDLLSASKFFQLEALQRHCEIICAKNINTETCVEIYNHAKFLEAPELSAYIEGYFLKNMAVLIELEPFKQLLYNTPVENCCPDVLHDLEKTLATRIRSIHLSSSKGSIV.

The chain crosses the membrane as a helical span at residues 160–180 (ILSWTISVNCIAASLSALSMY). ANK repeat units lie at residues 511–540 (QGMT…DINS), 557–586 (RQAT…NVEG), and 595–624 (YTET…DPMI). Residues 831-897 (SDVTFLVEGK…LYCGGTDALH (67 aa)) enclose the BTB domain.

The protein resides in the membrane. This Danio rerio (Zebrafish) protein is Ankyrin repeat- and BTB/POZ domain-containing protein 3-B (abtb3b).